A 211-amino-acid polypeptide reads, in one-letter code: Putative ATP-dependent Clp protease proteolytic subunit-like (211 aa).

A disordered region spans residues M1–S24. The active site involves H129.

It belongs to the peptidase S14 family.

Has lost one of the conserved residue (Ser) proposed to be part of the active site. Therefore it could be inactive. This chain is Putative ATP-dependent Clp protease proteolytic subunit-like, found in Streptomyces coelicolor (strain ATCC BAA-471 / A3(2) / M145).